Consider the following 612-residue polypeptide: Cyclin-dependent kinase 8 (612 aa).

Residues 23-345 (FENSKEIGRG…CEEAMNDIYF (323 aa)) form the Protein kinase domain. ATP-binding positions include 29–37 (IGRGTYGLV) and Lys-57. Asp-155 (proton acceptor) is an active-site residue. Composition is skewed to low complexity over residues 403 to 455 (QQQM…MGQP), 472 to 483 (HQMMQQQHQSQH), 543 to 555 (PQPGPSGYYQQRP), 564 to 573 (QGYMNPQMGM), and 600 to 612 (NPQQQQQWQQYHR). Disordered stretches follow at residues 403-483 (QQQM…QSQH) and 543-612 (PQPG…QYHR).

It belongs to the protein kinase superfamily. CMGC Ser/Thr protein kinase family. CDC2/CDKX subfamily. As to quaternary structure, component of the Mediator complex. Requires Mg(2+) as cofactor.

Its subcellular location is the nucleus. The catalysed reaction is L-seryl-[protein] + ATP = O-phospho-L-seryl-[protein] + ADP + H(+). The enzyme catalyses L-threonyl-[protein] + ATP = O-phospho-L-threonyl-[protein] + ADP + H(+). It carries out the reaction [DNA-directed RNA polymerase] + ATP = phospho-[DNA-directed RNA polymerase] + ADP + H(+). In terms of biological role, component of the Mediator complex, a coactivator involved in regulated gene transcription of nearly all RNA polymerase II-dependent genes. Mediator functions as a bridge to convey information from gene-specific regulatory proteins to the basal RNA polymerase II transcription machinery. Mediator is recruited to promoters by direct interactions with regulatory proteins and serves as a scaffold for the assembly of a functional pre-initiation complex with RNA polymerase II and the general transcription factors. Phosphorylates the CTD (C-terminal domain) of the large subunit of RNA polymerase II (RNAp II), which may inhibit the formation of a transcription initiation complex. In Caenorhabditis briggsae, this protein is Cyclin-dependent kinase 8 (cdk-8).